The primary structure comprises 182 residues: Small ribosomal subunit protein uS9 (182 aa).

The protein belongs to the universal ribosomal protein uS9 family.

The sequence is that of Small ribosomal subunit protein uS9 from Corynebacterium glutamicum (strain R).